An 80-amino-acid polypeptide reads, in one-letter code: MNVEEIKDKVFDIIVSKMGVNKDQIKTESKFADDLGADSLDTVELIMELENEFDVQIPDEDAEKISNVQQAIDYIVNAKK.

The Carrier domain occupies 4 to 79 (EEIKDKVFDI…QAIDYIVNAK (76 aa)). Serine 39 is modified (O-(pantetheine 4'-phosphoryl)serine).

This sequence belongs to the acyl carrier protein (ACP) family. In terms of processing, 4'-phosphopantetheine is transferred from CoA to a specific serine of apo-ACP by AcpS. This modification is essential for activity because fatty acids are bound in thioester linkage to the sulfhydryl of the prosthetic group.

It localises to the cytoplasm. It participates in lipid metabolism; fatty acid biosynthesis. In terms of biological role, carrier of the growing fatty acid chain in fatty acid biosynthesis. This is Acyl carrier protein from Prosthecochloris aestuarii (strain DSM 271 / SK 413).